Here is a 402-residue protein sequence, read N- to C-terminus: B3 domain-containing protein LFL1 (402 aa).

Residues 1–174 (MRGEERWQEQ…AAPRPSSHHT (174 aa)) are disordered. The span at 74–87 (ARPPTLAASAAAAS) shows a compositional bias: low complexity. Residues 88 to 102 (SPPPPPPPPIPPLPP) are compositionally biased toward pro residues. Low complexity-rich tracts occupy residues 103–139 (STST…AAVS) and 156–169 (PRPA…APRP). Residues 181-284 (LQKELRYSDV…RFVIGAKKAG (104 aa)) constitute a DNA-binding region (TF-B3). A disordered region spans residues 381 to 402 (LHVTDDKSGHSLIPNPKSGPHM).

As to expression, expressed in anthers, pollen grains and young developing embryos.

The protein localises to the nucleus. In terms of biological role, transcription repressor involved in flowering time regulation. Represses the flowering activator EHD1 by binding specifically to the DNA sequence 5'-CATGCATG-3 of its promoter. This chain is B3 domain-containing protein LFL1 (LFL1), found in Oryza sativa subsp. japonica (Rice).